We begin with the raw amino-acid sequence, 444 residues long: Lycopaoctaene synthase (444 aa).

NADP(+)-binding residues include R48 and R73. D76, E79, and D80 together coordinate Mg(2+). NADP(+)-binding residues include R215, K315, and R317. 2 helical membrane-spanning segments follow: residues 391–411 (TAMV…AYVY) and 415–435 (GTSL…IGLF).

This sequence belongs to the phytoene/squalene synthase family. The cofactor is Mg(2+).

It is found in the membrane. It carries out the reaction 2 (2E,6E)-farnesyl diphosphate + NADH + H(+) = squalene + 2 diphosphate + NAD(+). It catalyses the reaction 2 (2E,6E)-farnesyl diphosphate + NADPH + H(+) = squalene + 2 diphosphate + NADP(+). The catalysed reaction is 2 (2E,6E,10E)-geranylgeranyl diphosphate + NADPH + H(+) = all-trans-lycopaoctaene + 2 diphosphate + NADP(+). In terms of biological role, converts the C20 geranylgeranyl diphosphate (GGPP) to the C40 lycopaoctaene, the first committed intermediate in the production of lycopadiene. Converts farnesyl diphosphate (FPP) into squalene, a precursor for sterol biosynthesis in eukaryotes. Converts with low efficiency the C20 phytyl diphosphate (PPP) to the C40 lycopadiene in vitro. This reaction may not have biological significance in vivo. This Botryococcus braunii (Green alga) protein is Lycopaoctaene synthase.